The following is a 172-amino-acid chain: Adenine phosphoribosyltransferase (172 aa).

Belongs to the purine/pyrimidine phosphoribosyltransferase family. In terms of assembly, homodimer.

The protein localises to the cytoplasm. The catalysed reaction is AMP + diphosphate = 5-phospho-alpha-D-ribose 1-diphosphate + adenine. It functions in the pathway purine metabolism; AMP biosynthesis via salvage pathway; AMP from adenine: step 1/1. In terms of biological role, catalyzes a salvage reaction resulting in the formation of AMP, that is energically less costly than de novo synthesis. This Prochlorococcus marinus (strain MIT 9313) protein is Adenine phosphoribosyltransferase.